The primary structure comprises 262 residues: Shikimate dehydrogenase (NADP(+)) (262 aa).

Shikimate contacts are provided by residues S15–S17 and T62. The active-site Proton acceptor is K66. Residue E78 coordinates NADP(+). N87 and D102 together coordinate shikimate. Residues G126–A130, N150–R155, and M214 each bind NADP(+). Y216 lines the shikimate pocket. NADP(+) is bound at residue G236.

It belongs to the shikimate dehydrogenase family. Homodimer.

It catalyses the reaction shikimate + NADP(+) = 3-dehydroshikimate + NADPH + H(+). The protein operates within metabolic intermediate biosynthesis; chorismate biosynthesis; chorismate from D-erythrose 4-phosphate and phosphoenolpyruvate: step 4/7. Functionally, involved in the biosynthesis of the chorismate, which leads to the biosynthesis of aromatic amino acids. Catalyzes the reversible NADPH linked reduction of 3-dehydroshikimate (DHSA) to yield shikimate (SA). The chain is Shikimate dehydrogenase (NADP(+)) from Acinetobacter baumannii (strain ACICU).